Reading from the N-terminus, the 683-residue chain is Cyclic nucleotide-gated channel alpha-1 (683 aa).

Over 1–160 the chain is Cytoplasmic; sequence MKTNIINTWH…PSGNMYYNWL (160 aa). Residues 34–144 form a disordered region; that stretch reads ACSSFSDNDN…PKEKKEEEKK (111 aa). Basic and acidic residues predominate over residues 105–144; that stretch reads SKADDKKESKKDPEKKKKKEKEKEKKKEEKPKEKKEEEKK. A helical transmembrane segment spans residues 161 to 182; it reads FCITLPVMYNWTMIIARACFDE. Topologically, residues 183 to 192 are extracellular; that stretch reads LQSDYLEYWL. Residues 193–213 traverse the membrane as a helical segment; sequence IFDYVSDVVYLADMFVRTRTG. Residues 214–238 lie on the Cytoplasmic side of the membrane; sequence YLEQGLLVKDELKLIEKYKANLQFK. The helical transmembrane segment at 239–257 threads the bilayer; the sequence is LDVLSVIPTDLLYFKFGWN. The Extracellular portion of the chain corresponds to 258-262; that stretch reads YPEIR. The helical transmembrane segment at 263-281 threads the bilayer; that stretch reads LNRLLRISRMFEFFQRTET. Residues 282-288 lie on the Cytoplasmic side of the membrane; it reads RTNYPNI. Positions 286 to 394 are ion conduction pathway; that stretch reads PNIFRISNLV…GNIGSMISNM (109 aa). Residues 289-312 traverse the membrane as a helical segment; that stretch reads FRISNLVMYIVIIIHWNACVYYSI. Residues 313-335 lie on the Extracellular side of the membrane; it reads SKAIGFGNDTWVYPDVNDPEFGR. Asn320 carries an N-linked (GlcNAc...) asparagine glycan. 2 helical membrane-spanning segments follow: residues 336–370 and 371–395; these read LARK…VFVV and VDFL…SNMN. The segment at 353–356 is selectivity filter; it reads TIGE. The interval 396 to 472 is C-linker; the sequence is AARAEFQSRV…DTLKKVRIFA (77 aa). Over 396 to 683 the chain is Cytoplasmic; it reads AARAEFQSRV…ESEPTESLQG (288 aa). The tract at residues 476–596 is cyclic nucleotide-binding domain; the sequence is AGLLVELVLK…EEKGRQILMK (121 aa). Gly536, Ser539, Arg552, and Thr553 together coordinate 3',5'-cyclic GMP. Arg552 and Thr553 together coordinate 3',5'-cyclic AMP. Residues 614–668 adopt a coiled-coil conformation; it reads LEEKVTRMEGSVDLLQTRFARILAEYESMQQKLKQRLTKVEKFLKPLIETEFSAL.

It belongs to the cyclic nucleotide-gated cation channel (TC 1.A.1.5) family. CNGA1 subfamily. In terms of assembly, forms heterotetrameric channels composed of CNGA1 and CNGB1 subunits with 3:1 stoichiometry. May also form cyclic nucleotide-activated homotetrameric channels, that are efficiently activated by saturating cGMP, but poorly activated by saturating cAMP compared to the heterotetramer with CNGB1. The channel binds Ca(2+)-bound CALM1 via CaM1 and CaM2 regions of the CNGB1 subunit; this interaction modulates the affinity of the channel for cNMPs in response to intracellular Ca(2+) levels. In terms of tissue distribution, rod cells in the retina.

It is found in the cell membrane. The enzyme catalyses Ca(2+)(in) = Ca(2+)(out). It carries out the reaction Na(+)(in) = Na(+)(out). It catalyses the reaction K(+)(in) = K(+)(out). The catalysed reaction is NH4(+)(in) = NH4(+)(out). The enzyme catalyses Rb(+)(in) = Rb(+)(out). It carries out the reaction Li(+)(in) = Li(+)(out). It catalyses the reaction Cs(+)(in) = Cs(+)(out). Its function is as follows. Pore-forming subunit of the rod cyclic nucleotide-gated channel. Mediates rod photoresponses at dim light converting transient changes in intracellular cGMP levels into electrical signals. In the dark, cGMP levels are high and keep the channel open enabling a steady inward current carried by Na(+) and Ca(2+) ions that leads to membrane depolarization and neurotransmitter release from synaptic terminals. Upon photon absorption cGMP levels decline leading to channel closure and membrane hyperpolarization that ultimately slows neurotransmitter release and signals the presence of light, the end point of the phototransduction cascade. Conducts cGMP- and cAMP-gated ion currents, with permeability for monovalent and divalent cations. The selectivity for Ca(2+) over Na(+) increases with cGMP concentrations, whereas the selectivity among monovalent ions is independent of the cGMP levels. The sequence is that of Cyclic nucleotide-gated channel alpha-1 from Rattus norvegicus (Rat).